The primary structure comprises 262 residues: Indole-3-glycerol phosphate synthase (262 aa).

The protein belongs to the TrpC family.

It catalyses the reaction 1-(2-carboxyphenylamino)-1-deoxy-D-ribulose 5-phosphate + H(+) = (1S,2R)-1-C-(indol-3-yl)glycerol 3-phosphate + CO2 + H2O. The protein operates within amino-acid biosynthesis; L-tryptophan biosynthesis; L-tryptophan from chorismate: step 4/5. This is Indole-3-glycerol phosphate synthase from Thiobacillus denitrificans (strain ATCC 25259 / T1).